We begin with the raw amino-acid sequence, 370 residues long: Queuine tRNA-ribosyltransferase (370 aa).

The active-site Proton acceptor is the aspartate 89. Residues aspartate 89–phenylalanine 93, aspartate 143, glutamine 187, and glycine 214 contribute to the substrate site. Residues glycine 245–aspartate 251 form an RNA binding region. Aspartate 264 serves as the catalytic Nucleophile. Positions threonine 269–arginine 273 are RNA binding; important for wobble base 34 recognition. Cysteine 302, cysteine 304, cysteine 307, and histidine 333 together coordinate Zn(2+).

It belongs to the queuine tRNA-ribosyltransferase family. In terms of assembly, homodimer. Within each dimer, one monomer is responsible for RNA recognition and catalysis, while the other monomer binds to the replacement base PreQ1. It depends on Zn(2+) as a cofactor.

It carries out the reaction 7-aminomethyl-7-carbaguanine + guanosine(34) in tRNA = 7-aminomethyl-7-carbaguanosine(34) in tRNA + guanine. Its pathway is tRNA modification; tRNA-queuosine biosynthesis. Its function is as follows. Catalyzes the base-exchange of a guanine (G) residue with the queuine precursor 7-aminomethyl-7-deazaguanine (PreQ1) at position 34 (anticodon wobble position) in tRNAs with GU(N) anticodons (tRNA-Asp, -Asn, -His and -Tyr). Catalysis occurs through a double-displacement mechanism. The nucleophile active site attacks the C1' of nucleotide 34 to detach the guanine base from the RNA, forming a covalent enzyme-RNA intermediate. The proton acceptor active site deprotonates the incoming PreQ1, allowing a nucleophilic attack on the C1' of the ribose to form the product. After dissociation, two additional enzymatic reactions on the tRNA convert PreQ1 to queuine (Q), resulting in the hypermodified nucleoside queuosine (7-(((4,5-cis-dihydroxy-2-cyclopenten-1-yl)amino)methyl)-7-deazaguanosine). The protein is Queuine tRNA-ribosyltransferase of Azoarcus sp. (strain BH72).